Here is a 188-residue protein sequence, read N- to C-terminus: Cytochrome c-type protein NrfB (188 aa).

The N-terminal stretch at 1–32 is a signal peptide; sequence MSVLRSLLTAGVLASGLLWSLNGITATPAAQA. 15 residues coordinate heme: C49, C52, H53, C78, C81, H82, C113, C116, H117, C138, C141, H142, C163, C166, and H167.

Binds 5 heme groups per subunit.

The protein localises to the periplasm. Its pathway is energy metabolism; nitrogen metabolism. Plays a role in nitrite reduction. In Escherichia coli O6:H1 (strain CFT073 / ATCC 700928 / UPEC), this protein is Cytochrome c-type protein NrfB (nrfB).